The sequence spans 273 residues: Large ribosomal subunit protein uL2 (273 aa).

The interval 228–273 (VDHPHGGGEGKTSGGRHPVTPWGFSTKGKKTRKNKRTSKFIVKKRK) is disordered. A compositionally biased stretch (basic residues) spans 254 to 273 (KGKKTRKNKRTSKFIVKKRK).

This sequence belongs to the universal ribosomal protein uL2 family. As to quaternary structure, part of the 50S ribosomal subunit. Forms a bridge to the 30S subunit in the 70S ribosome.

In terms of biological role, one of the primary rRNA binding proteins. Required for association of the 30S and 50S subunits to form the 70S ribosome, for tRNA binding and peptide bond formation. It has been suggested to have peptidyltransferase activity; this is somewhat controversial. Makes several contacts with the 16S rRNA in the 70S ribosome. In Rickettsia prowazekii (strain Madrid E), this protein is Large ribosomal subunit protein uL2.